Consider the following 1247-residue polypeptide: ABC transporter B family member 14 (1247 aa).

Positions 48–337 (MFLGGLGTCI…AVPSLSAISK (290 aa)) constitute an ABC transmembrane type-1 1 domain. 6 consecutive transmembrane segments (helical) span residues 49-69 (FLGGLGTCIHGGTLPLFFVFF), 95-115 (LYLVYLGLVNLVSAWIGVACW), 172-192 (HVLRYLCQFIAGFVIGFLSVW), 196-216 (LLTLGVVPLIAIAGGGYAIVM), 277-297 (LGVGLTYSLLFCAWALLFWYA), and 315-335 (ILNVIYSGFALGQAVPSLSAI). Asn-362 and Asn-392 each carry an N-linked (GlcNAc...) asparagine glycan. The region spanning 373–608 (IEFCGVSFAY…GGDYATLVNC (236 aa)) is the ABC transporter 1 domain. ATP is bound at residue 407-414 (GPSGSGKS). One can recognise an ABC transmembrane type-1 2 domain in the interval 679-971 (EWLYALLGSI…TLALTPDIVK (293 aa)). Transmembrane regions (helical) follow at residues 680–700 (WLYALLGSIGAVLAGSQPALF) and 727–747 (AIIFVGAGIVTAPIYILQHYF). An N-linked (GlcNAc...) asparagine glycan is attached at Asn-780. Transmembrane regions (helical) follow at residues 807–824 (IVQNLSLTITALALAFFY), 830–850 (AVVTACFPLLIAASLTEQLFL), and 915–935 (LSQCLAFCSYALGLWYISVLI). N-linked (GlcNAc...) asparagine glycosylation is present at Asn-938. Residues 949-969 (FMVLLVTAYSVAETLALTPDI) traverse the membrane as a helical segment. Residues 1006-1242 (IEFRNVSFAY…SDGFYKKLTS (237 aa)) form the ABC transporter 2 domain. Residue Asn-1010 is glycosylated (N-linked (GlcNAc...) asparagine). An ATP-binding site is contributed by 1041-1048 (GPSGSGKS). An N-linked (GlcNAc...) asparagine glycan is attached at Asn-1108.

It belongs to the ABC transporter superfamily. ABCB family. Multidrug resistance exporter (TC 3.A.1.201) subfamily.

It is found in the membrane. The chain is ABC transporter B family member 14 (ABCB14) from Arabidopsis thaliana (Mouse-ear cress).